Reading from the N-terminus, the 548-residue chain is Membrane protein insertase YidC (548 aa).

A helical membrane pass occupies residues 6–26 (NLFLIAFLFVSFMIWQAWQTD). Positions 30 to 53 (QPLQTQTTQNTTSAAGDAVNQGVP) are disordered. Transmembrane regions (helical) follow at residues 345 to 365 (KFLH…TFIV), 420 to 440 (LGGC…YYML), 458 to 478 (LAAQ…MFFI), and 499 to 519 (PVIF…YYIV).

The protein belongs to the OXA1/ALB3/YidC family. Type 1 subfamily. Interacts with the Sec translocase complex via SecD. Specifically interacts with transmembrane segments of nascent integral membrane proteins during membrane integration.

The protein resides in the cell inner membrane. Its function is as follows. Required for the insertion and/or proper folding and/or complex formation of integral membrane proteins into the membrane. Involved in integration of membrane proteins that insert both dependently and independently of the Sec translocase complex, as well as at least some lipoproteins. Aids folding of multispanning membrane proteins. The sequence is that of Membrane protein insertase YidC from Erwinia tasmaniensis (strain DSM 17950 / CFBP 7177 / CIP 109463 / NCPPB 4357 / Et1/99).